Reading from the N-terminus, the 556-residue chain is Olefin beta-lactone synthetase (556 aa).

Residues 187–195 (TSGSTGVPK), 321–326 (TPYGAT), Asp-430, and Arg-445 each bind ATP.

This sequence belongs to the ATP-dependent AMP-binding enzyme family. Monomer. Forms a complex with OleB and OleD.

Its subcellular location is the cytoplasm. The catalysed reaction is a (2R,3S)-2-alkyl-3-hydroxyalkanoate + ATP = a cis-3-alkyl-4-alkyloxetan-2-one + AMP + diphosphate. Its function is as follows. Involved in olefin biosynthesis. Catalyzes the conversion of 2-alkyl-3-hydroxyalkanoic acids to beta-lactones in the presence of ATP. This chain is Olefin beta-lactone synthetase, found in Xanthomonas campestris pv. campestris (strain ATCC 33913 / DSM 3586 / NCPPB 528 / LMG 568 / P 25).